The sequence spans 76 residues: MLKELINKLLWHPDYNSEDYLIKYLHRGAENDEKSVPLKNIVIEDSFLVFDETHIPFHRILEIVNLKNGEILYKKR.

Belongs to the UPF0248 family.

The sequence is that of UPF0248 protein MmarC5_1387 from Methanococcus maripaludis (strain C5 / ATCC BAA-1333).